The sequence spans 75 residues: Small ribosomal subunit protein bS18 (75 aa).

It belongs to the bacterial ribosomal protein bS18 family. In terms of assembly, part of the 30S ribosomal subunit. Forms a tight heterodimer with protein bS6.

Binds as a heterodimer with protein bS6 to the central domain of the 16S rRNA, where it helps stabilize the platform of the 30S subunit. The protein is Small ribosomal subunit protein bS18 of Pectobacterium atrosepticum (strain SCRI 1043 / ATCC BAA-672) (Erwinia carotovora subsp. atroseptica).